We begin with the raw amino-acid sequence, 596 residues long: Fructan 1-exohydrolase w2 (596 aa).

A signal peptide spans 1–20 (MAQAWAFLLPVLVLGSYVTS). Residue aspartate 75 is part of the active site. N-linked (GlcNAc...) asparagine glycosylation is found at asparagine 168, asparagine 236, and asparagine 248. Cysteine 446 and cysteine 492 are joined by a disulfide. A glycan (N-linked (GlcNAc...) asparagine) is linked at asparagine 567.

This sequence belongs to the glycosyl hydrolase 32 family.

It catalyses the reaction Hydrolysis of terminal, non-reducing (2-&gt;1)-linked beta-D-fructofuranose residues in fructans.. Its activity is regulated as follows. Inhibited by sucrose. Functionally, hydrolyzes inulin-type beta-(2,1)-fructans, but not beta-(2,1)-linkages in branched fructans. Has low activity against beta-(2,6)-linked fructans. May play a role as a beta-(2,1)-trimmer during graminan biosynthesis. This Triticum aestivum (Wheat) protein is Fructan 1-exohydrolase w2.